A 313-amino-acid chain; its full sequence is Glycine--tRNA ligase alpha subunit (313 aa).

This sequence belongs to the class-II aminoacyl-tRNA synthetase family. In terms of assembly, tetramer of two alpha and two beta subunits.

Its subcellular location is the cytoplasm. It catalyses the reaction tRNA(Gly) + glycine + ATP = glycyl-tRNA(Gly) + AMP + diphosphate. The polypeptide is Glycine--tRNA ligase alpha subunit (Leuconostoc mesenteroides subsp. mesenteroides (strain ATCC 8293 / DSM 20343 / BCRC 11652 / CCM 1803 / JCM 6124 / NCDO 523 / NBRC 100496 / NCIMB 8023 / NCTC 12954 / NRRL B-1118 / 37Y)).